The following is a 577-amino-acid chain: CDPK-related kinase 7 (577 aa).

A disordered region spans residues 1–38 (MGLCHGKPIEQQSKNLPISNEIEETPKNSSQKAKSSGF). Residue G2 is the site of N-myristoyl glycine attachment. In terms of domain architecture, Protein kinase spans 124-386 (YEIDGEVGRG…AAQALCHPWL (263 aa)). ATP is bound by residues 130–138 (VGRGHFGYT) and K156. Residue D252 is the Proton acceptor of the active site. S292 is modified (phosphoserine). Residue S334 is modified to Phosphoserine; by CPK1, CPK10 and CPK34. The tract at residues 391–421 (ELKIPSDMIIYKLVKVYIMSSSLRKSALAAL) is autoinhibitory domain. Positions 410–430 (SSSLRKSALAALAKTLTVPQL) are calmodulin binding (CaMBD). EF-hand domains are found at residues 428–464 (PQLT…STEA), 465–500 (TKDS…VYQL), 501–540 (EAME…GPSV), and 543–572 (HVVL…VSSR). S443, N445, Y447, K484, E489, D520, N522, E529, D554, and K556 together coordinate Ca(2+). Residue S558 is modified to Phosphoserine.

It belongs to the protein kinase superfamily. Ser/Thr protein kinase family. CDPK subfamily. As to quaternary structure, binds calmodulin (CaM) in a calcium-dependent manner. Autophosphorylated.

It localises to the membrane. It catalyses the reaction L-seryl-[protein] + ATP = O-phospho-L-seryl-[protein] + ADP + H(+). The catalysed reaction is L-threonyl-[protein] + ATP = O-phospho-L-threonyl-[protein] + ADP + H(+). Activated by calcium and calmodulin. Autophosphorylation may play an important role in the regulation of the kinase activity. Its function is as follows. May play a role in signal transduction pathways that involve calcium as a second messenger. This Arabidopsis thaliana (Mouse-ear cress) protein is CDPK-related kinase 7 (CRK7).